A 67-amino-acid polypeptide reads, in one-letter code: Conotoxin Lt5.9 (67 aa).

The signal sequence occupies residues 1–19 (MLCLPVFIILLLLASPAAP). A propeptide spanning residues 20-46 (KSFETKVQSDLTRTDGNMETEENLGEV) is cleaved from the precursor.

Belongs to the conotoxin T superfamily. In terms of processing, contains 2 disulfide bonds that can be either 'C1-C3, C2-C4' or 'C1-C4, C2-C3', since these disulfide connectivities have been observed for conotoxins with cysteine framework V (for examples, see AC P0DQQ7 and AC P81755). As to expression, expressed by the venom duct.

The protein localises to the secreted. This Conus litteratus (Lettered cone) protein is Conotoxin Lt5.9.